Consider the following 729-residue polypeptide: Oligopeptide transporter 4 (729 aa).

Ala-2 bears the N-acetylalanine mark. A Phosphoserine modification is found at Ser-8. A run of 16 helical transmembrane segments spans residues 37 to 57 (MWFLGLISCSLLSFLNQFFSY), 61 to 81 (PLVITQITVQVATLPIGHFLA), 123 to 143 (AFGSGSAYAVGIITIIKAFYG), 148 to 168 (FIAGWLLIITTQVLGYGWAGL), 177 to 194 (AHMWWPSTLVQVSLFRAL), 207 to 227 (FFVIALVCSFGWYIVPGYLFT), 256 to 276 (GLGAFTLDWTAVASFLFSPLI), 279 to 299 (FFAIANVFIGYVLLIYFVLPL), 352 to 372 (LSMFFALTYGLGFATIASTLT), 410 to 430 (WWFYSMLAATLLISLALCVFL), 438 to 458 (WWGLVFASAMAFVFTLPISII), 522 to 542 (FLVQFIGTILAGTINITVAWW), 592 to 612 (YAAMNWFFLGGALGPVIVWSL), 621 to 637 (WIPLVNLPVLLGATAMM), 640 to 660 (ATAVNYNSWILVGTIFNLFVF), and 673 to 693 (VLSAAMDAGVAFMAVLLYFSV).

This sequence belongs to the oligopeptide OPT transporter (TC 2.A.67.1) family. In terms of tissue distribution, expressed in flowers, leaves, roots, and stems.

It is found in the membrane. Its function is as follows. Involved in the translocation of tetra- and pentapeptides across the cellular membrane in an energy-dependent manner. The polypeptide is Oligopeptide transporter 4 (OPT4) (Arabidopsis thaliana (Mouse-ear cress)).